The primary structure comprises 371 residues: UDP-N-acetylglucosamine--N-acetylmuramyl-(pentapeptide) pyrophosphoryl-undecaprenol N-acetylglucosamine transferase (371 aa).

Residues 15-17, Asn126, Arg172, Ser199, Ile256, 275-280, and Gln301 contribute to the UDP-N-acetyl-alpha-D-glucosamine site; these read TGG and ALTVSE.

It belongs to the glycosyltransferase 28 family. MurG subfamily.

The protein resides in the cell inner membrane. The catalysed reaction is di-trans,octa-cis-undecaprenyl diphospho-N-acetyl-alpha-D-muramoyl-L-alanyl-D-glutamyl-meso-2,6-diaminopimeloyl-D-alanyl-D-alanine + UDP-N-acetyl-alpha-D-glucosamine = di-trans,octa-cis-undecaprenyl diphospho-[N-acetyl-alpha-D-glucosaminyl-(1-&gt;4)]-N-acetyl-alpha-D-muramoyl-L-alanyl-D-glutamyl-meso-2,6-diaminopimeloyl-D-alanyl-D-alanine + UDP + H(+). It functions in the pathway cell wall biogenesis; peptidoglycan biosynthesis. Functionally, cell wall formation. Catalyzes the transfer of a GlcNAc subunit on undecaprenyl-pyrophosphoryl-MurNAc-pentapeptide (lipid intermediate I) to form undecaprenyl-pyrophosphoryl-MurNAc-(pentapeptide)GlcNAc (lipid intermediate II). In Francisella tularensis subsp. tularensis (strain FSC 198), this protein is UDP-N-acetylglucosamine--N-acetylmuramyl-(pentapeptide) pyrophosphoryl-undecaprenol N-acetylglucosamine transferase.